The sequence spans 394 residues: Nicotinate phosphoribosyltransferase (394 aa).

His218 is subject to Phosphohistidine; by autocatalysis.

It belongs to the NAPRTase family. Transiently phosphorylated on a His residue during the reaction cycle. Phosphorylation strongly increases the affinity for substrates and increases the rate of nicotinate D-ribonucleotide production. Dephosphorylation regenerates the low-affinity form of the enzyme, leading to product release.

The catalysed reaction is nicotinate + 5-phospho-alpha-D-ribose 1-diphosphate + ATP + H2O = nicotinate beta-D-ribonucleotide + ADP + phosphate + diphosphate. The protein operates within cofactor biosynthesis; NAD(+) biosynthesis; nicotinate D-ribonucleotide from nicotinate: step 1/1. Its function is as follows. Catalyzes the synthesis of beta-nicotinate D-ribonucleotide from nicotinate and 5-phospho-D-ribose 1-phosphate at the expense of ATP. In Xylella fastidiosa (strain 9a5c), this protein is Nicotinate phosphoribosyltransferase.